Consider the following 118-residue polypeptide: Ribonuclease P protein component (118 aa).

This sequence belongs to the RnpA family. In terms of assembly, consists of a catalytic RNA component (M1 or rnpB) and a protein subunit.

It catalyses the reaction Endonucleolytic cleavage of RNA, removing 5'-extranucleotides from tRNA precursor.. Functionally, RNaseP catalyzes the removal of the 5'-leader sequence from pre-tRNA to produce the mature 5'-terminus. It can also cleave other RNA substrates such as 4.5S RNA. The protein component plays an auxiliary but essential role in vivo by binding to the 5'-leader sequence and broadening the substrate specificity of the ribozyme. In Ureaplasma urealyticum serovar 10 (strain ATCC 33699 / Western), this protein is Ribonuclease P protein component.